Reading from the N-terminus, the 147-residue chain is uncharacterized protein (147 aa).

Positions 29 to 147 are disordered; that stretch reads PYGNNSVHQG…GHHHGHHHKH (119 aa). 2 stretches are compositionally biased toward polar residues: residues 34 to 45 and 60 to 73; these read SVHQGQPHTDQN and PQAQ…NQPS. Gly residues predominate over residues 75-92; sequence PFGGAGYTGPTAGTGFGN. Positions 122–147 are enriched in basic residues; that stretch reads DGHHKKHGRKEHDHHHGHHHGHHHKH.

This is an uncharacterized protein from Caenorhabditis elegans.